The sequence spans 99 residues: Thylakoid membrane protein ssl2009 (99 aa).

Residues 10 to 30 traverse the membrane as a helical segment; that stretch reads GFLLGTVIGGVVGGILGSVLA. The stretch at 50–84 forms a coiled coil; that stretch reads NLDSEENIELARRRLEDKIAQLNLVIDDVRDQLGH.

Its subcellular location is the cellular thylakoid membrane. In Synechocystis sp. (strain ATCC 27184 / PCC 6803 / Kazusa), this protein is Thylakoid membrane protein ssl2009.